Reading from the N-terminus, the 486-residue chain is CUGBP Elav-like family member 5 (486 aa).

Residues 1 to 11 (MARLTEREARR) are compositionally biased toward basic and acidic residues. A disordered region spans residues 1 to 39 (MARLTEREARRQQQQHPPQQQQPRACPMSGPEPPAQQSD). The segment covering 12-24 (QQQQHPPQQQQPR) has biased composition (low complexity). 3 consecutive RRM domains span residues 47–128 (IKLF…PADS), 135–215 (RKLF…FADT), and 401–479 (CNLF…LKRP).

This sequence belongs to the CELF/BRUNOL family.

Its subcellular location is the nucleus. The protein localises to the cytoplasm. Its function is as follows. RNA-binding protein that may be implicated in the regulation of pre-mRNA alternative splicing. The sequence is that of CUGBP Elav-like family member 5 (celf5) from Xenopus tropicalis (Western clawed frog).